A 215-amino-acid chain; its full sequence is Pyrrolidone-carboxylate peptidase (215 aa).

Catalysis depends on residues E78, C141, and H165.

This sequence belongs to the peptidase C15 family. As to quaternary structure, homotetramer.

It is found in the cytoplasm. The enzyme catalyses Release of an N-terminal pyroglutamyl group from a polypeptide, the second amino acid generally not being Pro.. Functionally, removes 5-oxoproline from various penultimate amino acid residues except L-proline. In Lactobacillus johnsonii (strain CNCM I-12250 / La1 / NCC 533), this protein is Pyrrolidone-carboxylate peptidase.